A 343-amino-acid chain; its full sequence is Mas-related G-protein coupled receptor member F (343 aa).

The Extracellular portion of the chain corresponds to 1-44 (MAGNCSWEAHSTNQNKMCPGMSEALELYSRGFLTIEQIATLPPP). N4 is a glycosylation site (N-linked (GlcNAc...) asparagine). A helical transmembrane segment spans residues 45-66 (AVTNYIFLLLCLCGLVGNGLVL). Residues 67–82 (WFFGFSIKRTPFSIYF) lie on the Cytoplasmic side of the membrane. A helical transmembrane segment spans residues 83–104 (LHLASADGIYLFSKAVIALLNM). Over 105–123 (GTFLGSFPDYVRRVSRIVG) the chain is Extracellular. Residues 124–144 (LCTFFAGVSLLPAISIERCVS) form a helical membrane-spanning segment. Topologically, residues 145 to 160 (VIFPMWYWRRRPKRLS) are cytoplasmic. Residues 161 to 181 (AGVCALLWLLSFLVTSIHNYF) traverse the membrane as a helical segment. Residues 182–198 (CMFLGHEASGTACLNMD) lie on the Extracellular side of the membrane. The helical transmembrane segment at 199-220 (ISLGILLFFLFCPLMVLPCLAL) threads the bilayer. The Cytoplasmic portion of the chain corresponds to 221–241 (ILHVECRARRRQRSAKLNHVV). The helical transmembrane segment at 242–263 (LAIVSVFLVSSIYLGIDWFLFW) threads the bilayer. Residues 264–273 (VFQIPAPFPE) are Extracellular-facing. A helical transmembrane segment spans residues 274–294 (YVTDLCICINSSAKPIVYFLA). Residues 295–343 (GRDKSQRLWEPLRVVFQRALRDGAEPGDAASSTPNTVTMEMQCPSGNAS) lie on the Cytoplasmic side of the membrane. The segment at 318-343 (AEPGDAASSTPNTVTMEMQCPSGNAS) is disordered. Residues 324 to 343 (ASSTPNTVTMEMQCPSGNAS) show a composition bias toward polar residues.

It belongs to the G-protein coupled receptor 1 family. Mas subfamily. As to expression, gut, vas deferens, uterus and aorta; barely detectable in liver, kidney, lung, and salivary gland. In the brain, markedly abundant in the cerebellum.

The protein localises to the cell membrane. Its function is as follows. Orphan receptor. May bind to a neuropeptide and may regulate nociceptor function and/or development, including the sensation or modulation of pain. The chain is Mas-related G-protein coupled receptor member F (Mrgprf) from Rattus norvegicus (Rat).